Reading from the N-terminus, the 255-residue chain is uncharacterized protein (255 aa).

Positions 1–23 (MKRLNKLVLYISFLILVISFTAG) are cleaved as a signal peptide. Residue Cys-24 is the site of N-palmitoyl cysteine attachment. Residue Cys-24 is the site of S-diacylglycerol cysteine attachment.

This sequence belongs to the staphylococcal tandem lipoprotein family.

Its subcellular location is the cell membrane. This is an uncharacterized protein from Staphylococcus aureus (strain N315).